Consider the following 355-residue polypeptide: Double-stranded RNA-binding protein 4 (355 aa).

DRBM domains are found at residues 4-73 (VYKG…SLTP) and 82-150 (AYKN…SIKN). Polar residues predominate over residues 149-188 (KNGNSNQTGSPTLPSERQEDVNSNVKSSPQEIHSQPSSKV). The interval 149-193 (KNGNSNQTGSPTLPSERQEDVNSNVKSSPQEIHSQPSSKVVMTPD) is disordered.

As to quaternary structure, heterodimer with DRB1 or DRB5. Interacts with DCL4 and cauliflower mosaic virus (CaMV) transactivator/viroplasmin protein. Interaction with CaMV transactivator/viroplasmin protein inhibits RNA silencing ability of DRB4. In terms of tissue distribution, expressed in roots, leaf vasculature, shoot apical meristem (SAM) and developing anthers.

The protein resides in the nucleus. In terms of biological role, double-stranded RNA-binding protein involved in RNA-mediated post-transcriptional gene silencing (PTGS). Functions in the trans-acting small interfering RNAs (ta-siRNAs) biogenesis by binding and assisting DICER-LIKE 4 (DCL4). Required for DCL4 activity. Required for the 21 nucleotide ta-siRNAs production of the TAS3 transcript in leaves but not in flowers. Plays an important role in silencing RNA of both DNA and RNA viruses. Involved with argonaute 7 (AGO7) and RDR6 in turnip crinkle virus (TCV) silencing. May not be directly involved in viral siRNA production. May stabilize the 21 nucleotide viral siRNAs and deliver them to the RISC complex. Targeted by the viral silencing suppressor (VSR) transactivator/viroplasmin (TAV) protein of the cauliflower mosaic virus (CaMV) that inactivates DRB4 function in RNA silencing. Probably not involved in the guide strand selection from RNA duplexes. Involved in leaf morphology through its function in ta-siRNA-mediated silencing. This chain is Double-stranded RNA-binding protein 4 (DBR4), found in Arabidopsis thaliana (Mouse-ear cress).